The sequence spans 528 residues: Sphingosine-1-phosphate lyase (528 aa).

The helical transmembrane segment at 13–35 threads the bilayer; that stretch reads PAKLVLATAGITAASILAYQAIT. Lys-324 is subject to N6-(pyridoxal phosphate)lysine.

This sequence belongs to the group II decarboxylase family. Sphingosine-1-phosphate lyase subfamily. It depends on pyridoxal 5'-phosphate as a cofactor.

It is found in the endoplasmic reticulum membrane. It carries out the reaction sphinganine 1-phosphate = hexadecanal + phosphoethanolamine. Its pathway is lipid metabolism; sphingolipid metabolism. Its function is as follows. Cleaves phosphorylated sphingoid bases (PSBs), such as sphingosine-1-phosphate, into fatty aldehydes and phosphoethanolamine. Sphingosine-1-phosphate (S1P) probably acts intracellularly as a second messenger perhaps by promoting cell proliferation; the absence of S1P lyase increases its concentration. This leads to increased lateral pseudopod formation as well as defects in the efficiency of chemotaxis. Overexpression of S1P lyase causes decreased growth rates, entry into stationary phase at lower cell density and increased sensitivity to the antitumor agents cisplatin and carboplatin; these effects are more pronounced in cells that express more enzyme. In Dictyostelium discoideum (Social amoeba), this protein is Sphingosine-1-phosphate lyase (sglA).